The chain runs to 334 residues: Large ribosomal subunit protein uL3 (334 aa).

Residues 1 to 10 (MGMKKNRPRR) show a composition bias toward basic residues. Residues 1 to 21 (MGMKKNRPRRGSLAFSPRKRA) form a disordered region.

The protein belongs to the universal ribosomal protein uL3 family. In terms of assembly, part of the 50S ribosomal subunit. Forms a cluster with proteins L14 and L24e.

One of the primary rRNA binding proteins, it binds directly near the 3'-end of the 23S rRNA, where it nucleates assembly of the 50S subunit. The chain is Large ribosomal subunit protein uL3 from Methanococcus maripaludis (strain DSM 14266 / JCM 13030 / NBRC 101832 / S2 / LL).